The sequence spans 476 residues: Probable cytosol aminopeptidase (476 aa).

Positions 242 and 247 each coordinate Mn(2+). Residue K254 is part of the active site. Residues D265, D324, and E326 each coordinate Mn(2+). R328 is an active-site residue.

The protein belongs to the peptidase M17 family. It depends on Mn(2+) as a cofactor.

The protein localises to the cytoplasm. It catalyses the reaction Release of an N-terminal amino acid, Xaa-|-Yaa-, in which Xaa is preferably Leu, but may be other amino acids including Pro although not Arg or Lys, and Yaa may be Pro. Amino acid amides and methyl esters are also readily hydrolyzed, but rates on arylamides are exceedingly low.. The catalysed reaction is Release of an N-terminal amino acid, preferentially leucine, but not glutamic or aspartic acids.. Functionally, presumably involved in the processing and regular turnover of intracellular proteins. Catalyzes the removal of unsubstituted N-terminal amino acids from various peptides. This Treponema denticola (strain ATCC 35405 / DSM 14222 / CIP 103919 / JCM 8153 / KCTC 15104) protein is Probable cytosol aminopeptidase.